Consider the following 484-residue polypeptide: Cobyric acid synthase (484 aa).

One can recognise a GATase cobBQ-type domain in the interval 248-435; the sequence is VLKVIVPVLP…LHGLFEGSQS (188 aa). Cysteine 329 functions as the Nucleophile in the catalytic mechanism. Histidine 427 is a catalytic residue.

Belongs to the CobB/CobQ family. CobQ subfamily.

Its pathway is cofactor biosynthesis; adenosylcobalamin biosynthesis. Functionally, catalyzes amidations at positions B, D, E, and G on adenosylcobyrinic A,C-diamide. NH(2) groups are provided by glutamine, and one molecule of ATP is hydrogenolyzed for each amidation. The sequence is that of Cobyric acid synthase from Pseudomonas putida (strain ATCC 700007 / DSM 6899 / JCM 31910 / BCRC 17059 / LMG 24140 / F1).